The following is a 562-amino-acid chain: Serine palmitoyltransferase 2 (562 aa).

Residues 67-87 traverse the membrane as a helical segment; sequence PMLVAVLTYVGYGVLTLFGYL. K379 carries the N6-(pyridoxal phosphate)lysine modification.

It belongs to the class-II pyridoxal-phosphate-dependent aminotransferase family. As to quaternary structure, component of the serine palmitoyltransferase (SPT) complex, which is composed of SPTLC1, SPTLC2 or SPTLC3 and SPTSSA or SPTSSB. The heterodimer consisting of SPTLC1 and SPTLC2/SPTLC3 forms the catalytic core of the enzyme, while SPTSSA or SPTSSB subunits determine substrate specificity. SPT also interacts with ORMDL proteins, especially ORMDL3, which negatively regulate SPT activity in the presence of ceramides. Forms dimers of heterodimers with SPTLC1. The cofactor is pyridoxal 5'-phosphate. In terms of tissue distribution, widely expressed.

It is found in the endoplasmic reticulum membrane. The catalysed reaction is L-serine + hexadecanoyl-CoA + H(+) = 3-oxosphinganine + CO2 + CoA. It catalyses the reaction octadecanoyl-CoA + L-serine + H(+) = 3-oxoeicosasphinganine + CO2 + CoA. The protein operates within lipid metabolism; sphingolipid metabolism. With respect to regulation, SPT complex catalytic activity is negatively regulated by ORMDL proteins, including ORMDL3, in the presence of ceramides. This mechanism allows to maintain ceramide levels at sufficient concentrations for the production of complex sphingolipids, but which prevents the accumulation of ceramides to levels that trigger apoptosis. Its function is as follows. Component of the serine palmitoyltransferase multisubunit enzyme (SPT) that catalyzes the initial and rate-limiting step in sphingolipid biosynthesis by condensing L-serine and activated acyl-CoA (most commonly palmitoyl-CoA) to form long-chain bases. The SPT complex is composed of SPTLC1, SPTLC2 or SPTLC3 and SPTSSA or SPTSSB. Within this complex, the heterodimer consisting of SPTLC1 and SPTLC2/SPTLC3 forms the catalytic core. The composition of the serine palmitoyltransferase (SPT) complex determines the substrate preference. The SPTLC1-SPTLC2-SPTSSA complex shows a strong preference for C16-CoA substrate, while the SPTLC1-SPTLC3-SPTSSA isozyme uses both C14-CoA and C16-CoA as substrates, with a slight preference for C14-CoA. The SPTLC1-SPTLC2-SPTSSB complex shows a strong preference for C18-CoA substrate, while the SPTLC1-SPTLC3-SPTSSB isozyme displays an ability to use a broader range of acyl-CoAs, without apparent preference. Crucial for adipogenesis. The polypeptide is Serine palmitoyltransferase 2 (Homo sapiens (Human)).